The following is a 102-amino-acid chain: Small ribosomal subunit protein uS10 (102 aa).

This sequence belongs to the universal ribosomal protein uS10 family. Part of the 30S ribosomal subunit.

Its function is as follows. Involved in the binding of tRNA to the ribosomes. The sequence is that of Small ribosomal subunit protein uS10 from Desulfitobacterium hafniense (strain DSM 10664 / DCB-2).